The chain runs to 267 residues: Putative carbamate hydrolase RutD (267 aa).

Positions 23 to 139 (VVLLSSGLGG…IQRCFDTRIH (117 aa)) constitute an AB hydrolase-1 domain.

Belongs to the AB hydrolase superfamily. Hydrolase RutD family.

The catalysed reaction is carbamate + 2 H(+) = NH4(+) + CO2. Functionally, involved in pyrimidine catabolism. May facilitate the hydrolysis of carbamate, a reaction that can also occur spontaneously. The chain is Putative carbamate hydrolase RutD from Caulobacter segnis (strain ATCC 21756 / DSM 7131 / JCM 7823 / NBRC 15250 / LMG 17158 / TK0059) (Mycoplana segnis).